The primary structure comprises 501 residues: Envelope glycoprotein C homolog (501 aa).

Residues Met-1 to Gly-27 form the signal peptide. Residues Ala-28–Pro-465 are Virion surface-facing. Asn-46 carries an N-linked (GlcNAc...) asparagine; by host glycan. Positions Pro-53 to Tyr-87 are disordered. The segment covering Ser-62 to Ser-72 has biased composition (low complexity). N-linked (GlcNAc...) asparagine; by host glycans are attached at residues Asn-91, Asn-100, Asn-120, Asn-212, Asn-354, Asn-400, and Asn-429. Positions Pro-258 to Thr-356 constitute an Ig-like domain. The chain crosses the membrane as a helical span at residues Met-466–Tyr-492. Residues Asn-493 to Leu-501 lie on the Cytoplasmic side of the membrane.

The protein belongs to the herpesviridae glycoprotein C family.

It is found in the secreted. It localises to the host cell membrane. Functionally, may play an immunoevasive role in the pathogenesis of Marek's disease. It is a candidate for causing the early-stage immunosuppression that occurs after MDHV infection. This Gallus gallus (Chicken) protein is Envelope glycoprotein C homolog (gC).